The sequence spans 42 residues: SGISGPLSCGRNGGVCIPIRCPVPMRQIGTCFGRPVKCCRSW.

3 disulfides stabilise this stretch: Cys-9-Cys-38, Cys-16-Cys-31, and Cys-21-Cys-39.

The protein belongs to the beta-defensin family. Neutrophilic granules.

Its subcellular location is the secreted. In terms of biological role, has bactericidal activity. Active against E.coli ML35 and S.aureus 502A. The chain is Beta-defensin 13 (DEFB13) from Bos taurus (Bovine).